The primary structure comprises 224 residues: Ribose-5-phosphate isomerase A (224 aa).

Substrate-binding positions include 26–29 (TGST), 82–85 (DGAD), and 95–98 (KGGG). Glu-104 acts as the Proton acceptor in catalysis. Substrate is bound at residue Lys-122.

This sequence belongs to the ribose 5-phosphate isomerase family. Homodimer.

It catalyses the reaction aldehydo-D-ribose 5-phosphate = D-ribulose 5-phosphate. The protein operates within carbohydrate degradation; pentose phosphate pathway; D-ribose 5-phosphate from D-ribulose 5-phosphate (non-oxidative stage): step 1/1. Catalyzes the reversible conversion of ribose-5-phosphate to ribulose 5-phosphate. This chain is Ribose-5-phosphate isomerase A, found in Streptococcus suis (strain 98HAH33).